The chain runs to 272 residues: Phosphate import ATP-binding protein PstB (272 aa).

One can recognise an ABC transporter domain in the interval 26–267; sequence LEIRNLDLRY…PKKRKTEDYI (242 aa). 58–65 is a binding site for ATP; that stretch reads GPSGCGKS.

This sequence belongs to the ABC transporter superfamily. Phosphate importer (TC 3.A.1.7) family. In terms of assembly, the complex is composed of two ATP-binding proteins (PstB), two transmembrane proteins (PstC and PstA) and a solute-binding protein (PstS).

The protein resides in the cell inner membrane. It carries out the reaction phosphate(out) + ATP + H2O = ADP + 2 phosphate(in) + H(+). Functionally, part of the ABC transporter complex PstSACB involved in phosphate import. Responsible for energy coupling to the transport system. The protein is Phosphate import ATP-binding protein PstB of Shewanella frigidimarina (strain NCIMB 400).